A 1359-amino-acid polypeptide reads, in one-letter code: Tripeptidyl-peptidase 2 (1359 aa).

The segment at 45 to 81 (AASTTTRGGPSPSAGVAPRAMPSSSSSPPSAAEGTTA) is disordered. Residues 64 to 81 (AMPSSSSSPPSAAEGTTA) show a composition bias toward low complexity. In terms of domain architecture, Peptidase S8 spans 102 to 600 (EIGVDRFLAA…HGLLQVDRAF (499 aa)). Residues aspartate 126, histidine 353, and serine 539 each act as charge relay system in the active site.

It belongs to the peptidase S8 family.

It catalyses the reaction Release of an N-terminal tripeptide from a polypeptide.. Its function is as follows. Serine protease that may function in the proteasome pathway. The polypeptide is Tripeptidyl-peptidase 2 (TPP2) (Oryza sativa subsp. japonica (Rice)).